A 427-amino-acid polypeptide reads, in one-letter code: O-methyltransferase sol2 (427 aa).

Aspartate 281 is an S-adenosyl-L-methionine binding site. Histidine 327 (proton acceptor) is an active-site residue.

Belongs to the class I-like SAM-binding methyltransferase superfamily. Cation-independent O-methyltransferase family. COMT subfamily.

It functions in the pathway phytotoxin biosynthesis. In terms of biological role, O-methyltransferase; part of the gene cluster that mediates the biosynthesis of the phytotoxin solanapyrone, a causal agent of early blight disease of potato and tomato. The prosolanapyrone synthase sol1 is a polyketide synthase that produces the octaketide desmethylprosolanapyrone I via sequential condensations of 7 malonyl-CoA units with one acetyl-CoA unit, and one methylation step. The octaketide backbone is further methylated by the sol2 O-methyltransferase to yield prosolanapyrone I. Prosolanapyrone I is hydroxylated to prosolanapyrone II by the cytochrome P450 monooxygenase sol6. The solanapyrone synthase sol5 then catalyzes the oxidation of prosolanapyrone II and the subsequent Diels Alder cycloisomerization of the product prosolanapyrone III to solanapyrones A and D. Solanapyrones A and D are then converted into solanapyrones B and E, respectively, by the sol3 dehydrogenase. This is O-methyltransferase sol2 (sol2) from Alternaria solani.